Here is a 123-residue protein sequence, read N- to C-terminus: Large ribosomal subunit protein uL29 (123 aa).

The protein belongs to the universal ribosomal protein uL29 family.

This Euphorbia esula (Leafy spurge) protein is Large ribosomal subunit protein uL29 (RPL35).